A 631-amino-acid polypeptide reads, in one-letter code: Coiled-coil domain-containing protein 93 (631 aa).

Disordered stretches follow at residues 1–23 (MGLP…DEEQ) and 214–243 (QSKM…HEED). Residues 1 to 430 (MGLPRGPEGQ…LKAERAPRGD (430 aa)) form a sufficient for interaction with CCDC22 region. Residues 215-225 (SKMEKAEDKKT) show a composition bias toward basic and acidic residues. Residues Ser298, Ser301, and Ser305 each carry the phosphoserine modification. A coiled-coil region spans residues 309–631 (LGTSQLHRRK…LLSKVKAKAS (323 aa)). The span at 421–433 (LKAERAPRGDEKT) shows a compositional bias: basic and acidic residues. Positions 421–447 (LKAERAPRGDEKTLSSGEPPGTLTSAM) are disordered. Residues 448-631 (THDEDLDRRY…LLSKVKAKAS (184 aa)) form a sufficient for interaction with WASHC2C region.

The protein belongs to the CCDC93 family. Component of the commander complex consisting of the CCC subcomplex and the retriever subcomplex. Component of the CCC (COMMD/CCDC22/CCDC93) subcomplex consisting of COMMD1, COMMD2, COMMD3, COMMD4, COMMD5, COMMD6, COMMD7, COMMD8, COMMD9, COMMD10, CCDC22 and CCDC93. Forms a coiled-coil heterodimer with CCDC22; this heterodimer interacts with the guanine nucleotide exchange factor DENND10; the interaction is direct. Interacts with WASHC1. Interacts directly with WASHC2C. Interacts with SNX17 and SNX31.

The protein localises to the early endosome. Its function is as follows. Component of the commander complex that is essential for endosomal recycling of transmembrane cargos; the commander complex is composed of composed of the CCC subcomplex and the retriever subcomplex. Component of the CCC complex, which is involved in the regulation of endosomal recycling of surface proteins, including integrins, signaling receptor and channels. The CCC complex associates with SNX17, retriever and WASH complexes to prevent lysosomal degradation and promote cell surface recycling of numerous cargos such as integrins ITGA5:ITGB1. Involved in copper-dependent ATP7A trafficking between the trans-Golgi network and vesicles in the cell periphery; the function is proposed to depend on its association within the CCC complex and cooperation with the WASH complex on early endosomes and is dependent on its interaction with WASHC2C. Functionally, (Microbial infection) The CCC complex, in collaboration with the heterotrimeric retriever complex, mediates the exit of human papillomavirus to the cell surface. This is Coiled-coil domain-containing protein 93 (CCDC93) from Homo sapiens (Human).